The primary structure comprises 412 residues: 3,4-dihydroxybenzoate--[aryl-carrier protein] ligase (412 aa).

Belongs to the ATP-dependent AMP-binding enzyme family.

The catalysed reaction is holo-[aryl-carrier protein] + 3,4-dihydroxybenzoate + ATP = 3,4-dihydroxybenzoyl-[aryl-carrier protein] + AMP + diphosphate. It carries out the reaction 3,4-dihydroxybenzoate + ATP + H(+) = 3,4-dihydroxybenzoyl-5'-AMP + diphosphate. The enzyme catalyses 3,4-dihydroxybenzoyl-5'-AMP + holo-[aryl-carrier protein] = 3,4-dihydroxybenzoyl-[aryl-carrier protein] + AMP + H(+). The protein operates within siderophore biosynthesis; petrobactin biosynthesis. ATP-pyrophosphate exchange is inhibited in vitro by nonhydrolyzable acylsulfamate analogs that mimic the AsbC-bound intermediate 3,4-dihydroxybenzoyl-AMP. Its function is as follows. Involved in the biosynthesis of petrobactin, a catecholate siderophore that functions in both iron acquisition and virulence. Catalyzes the adenylation of 3,4-dihydroxybenzoate (3,4-DHBA) to the corresponding AMP ester, followed by the transfer of the activated unit to the phosphopantetheine thiol of the aryl-carrier protein AsbD. The chain is 3,4-dihydroxybenzoate--[aryl-carrier protein] ligase from Bacillus anthracis.